The following is a 424-amino-acid chain: Histidine--tRNA ligase (424 aa).

This sequence belongs to the class-II aminoacyl-tRNA synthetase family. Homodimer.

Its subcellular location is the cytoplasm. The catalysed reaction is tRNA(His) + L-histidine + ATP = L-histidyl-tRNA(His) + AMP + diphosphate + H(+). The protein is Histidine--tRNA ligase of Escherichia coli O139:H28 (strain E24377A / ETEC).